A 429-amino-acid polypeptide reads, in one-letter code: Dihydroorotase (429 aa).

2 residues coordinate Zn(2+): His61 and His63. Residues His63–Arg65 and Asn95 each bind substrate. The Zn(2+) site is built by Asp153, His180, and His233. Residue Asn279 participates in substrate binding. Zn(2+) is bound at residue Asp306. Asp306 is a catalytic residue. Residues His310 and Phe324–Gly325 each bind substrate.

The protein belongs to the metallo-dependent hydrolases superfamily. DHOase family. Class I DHOase subfamily. Requires Zn(2+) as cofactor.

The catalysed reaction is (S)-dihydroorotate + H2O = N-carbamoyl-L-aspartate + H(+). It participates in pyrimidine metabolism; UMP biosynthesis via de novo pathway; (S)-dihydroorotate from bicarbonate: step 3/3. Catalyzes the reversible cyclization of carbamoyl aspartate to dihydroorotate. The protein is Dihydroorotase of Ligilactobacillus salivarius (strain UCC118) (Lactobacillus salivarius).